We begin with the raw amino-acid sequence, 147 residues long: Sec-independent protein translocase protein TatB (147 aa).

A helical membrane pass occupies residues 1-21 (MFDVSFTELMVIGVIALVVIG). The interval 67–147 (DETARSMQTS…DKTPPTGSAT (81 aa)) is disordered. Basic and acidic residues predominate over residues 93-103 (AELDDTARDAS). Composition is skewed to low complexity over residues 109 to 120 (ADAPAEPAPAVA) and 129 to 147 (APPAAATPADKTPPTGSAT).

This sequence belongs to the TatB family. As to quaternary structure, the Tat system comprises two distinct complexes: a TatABC complex, containing multiple copies of TatA, TatB and TatC subunits, and a separate TatA complex, containing only TatA subunits. Substrates initially bind to the TatABC complex, which probably triggers association of the separate TatA complex to form the active translocon.

It is found in the cell inner membrane. Its function is as follows. Part of the twin-arginine translocation (Tat) system that transports large folded proteins containing a characteristic twin-arginine motif in their signal peptide across membranes. Together with TatC, TatB is part of a receptor directly interacting with Tat signal peptides. TatB may form an oligomeric binding site that transiently accommodates folded Tat precursor proteins before their translocation. The protein is Sec-independent protein translocase protein TatB of Bordetella pertussis (strain Tohama I / ATCC BAA-589 / NCTC 13251).